We begin with the raw amino-acid sequence, 101 residues long: NAD(P)H-quinone oxidoreductase subunit 4L, chloroplastic (101 aa).

A run of 3 helical transmembrane segments spans residues 2–22 (ILDS…YGLI), 32–52 (MSLE…SNFI), and 64–84 (IFIM…ILAI).

This sequence belongs to the complex I subunit 4L family. NDH is composed of at least 16 different subunits, 5 of which are encoded in the nucleus.

Its subcellular location is the plastid. It is found in the chloroplast thylakoid membrane. It carries out the reaction a plastoquinone + NADH + (n+1) H(+)(in) = a plastoquinol + NAD(+) + n H(+)(out). It catalyses the reaction a plastoquinone + NADPH + (n+1) H(+)(in) = a plastoquinol + NADP(+) + n H(+)(out). In terms of biological role, NDH shuttles electrons from NAD(P)H:plastoquinone, via FMN and iron-sulfur (Fe-S) centers, to quinones in the photosynthetic chain and possibly in a chloroplast respiratory chain. The immediate electron acceptor for the enzyme in this species is believed to be plastoquinone. Couples the redox reaction to proton translocation, and thus conserves the redox energy in a proton gradient. The sequence is that of NAD(P)H-quinone oxidoreductase subunit 4L, chloroplastic from Chlorokybus atmophyticus (Soil alga).